The sequence spans 497 residues: Long chain base biosynthesis protein 2c (497 aa).

The chain crosses the membrane as a helical span at residues 4 to 24 (VPFVTAVTTVFSYGVIFGFGH). Lys319 carries the post-translational modification N6-(pyridoxal phosphate)lysine.

It belongs to the class-II pyridoxal-phosphate-dependent aminotransferase family. As to quaternary structure, heterodimer with LCB1. Component of the serine palmitoyltransferase (SPT) complex, composed of LCB1 and LCB2. Pyridoxal 5'-phosphate serves as cofactor.

The protein localises to the endoplasmic reticulum membrane. It carries out the reaction L-serine + hexadecanoyl-CoA + H(+) = 3-oxosphinganine + CO2 + CoA. The protein operates within lipid metabolism; sphingolipid metabolism. In terms of biological role, serine palmitoyltransferase (SPT). The heterodimer formed with LCB1 constitutes the catalytic core. This chain is Long chain base biosynthesis protein 2c, found in Oryza sativa subsp. japonica (Rice).